Reading from the N-terminus, the 862-residue chain is DNA replication licensing factor MCM4 (862 aa).

The segment covering 1–12 has biased composition (gly residues); sequence MASRGGGGGGDG. Residues 1–132 form a disordered region; sequence MASRGGGGGG…GGGGGGAGAD (132 aa). Low complexity-rich tracts occupy residues 20-41 and 52-64; these read SSPDVRPSSPLPATNSSPPQSG and SASPYPSSPSLGG. Residues 289–317 form a C4-type zinc finger; the sequence is CLVCGFYSEPVMVDRGRVTEPHICQKEQC. Positions 453–659 constitute an MCM domain; the sequence is IYDRLTRSLA…QTDRRLAKHI (207 aa). 503-510 lines the ATP pocket; that stretch reads GDPGTSKS. The Arginine finger signature appears at 635–638; it reads SRFD.

This sequence belongs to the MCM family. In terms of assembly, component of the minichromosome maintenance (MCM) complex, a heterotetramer composed of MCM2, MCM3, MCM4, MCM5, MCM6 and MCM7.

The protein resides in the nucleus. The enzyme catalyses ATP + H2O = ADP + phosphate + H(+). In terms of biological role, probable component of the MCM2-7 complex (MCM complex) that may function as a DNA helicase and which is essential to undergo a single round of replication initiation and elongation per cell cycle in eukaryotic cells. In Oryza sativa subsp. japonica (Rice), this protein is DNA replication licensing factor MCM4 (MCM4).